The primary structure comprises 452 residues: MSMASLYRRSLSPPAIDFASFEGKQIFNEALQKGTMEGFFGLISYFQTQSEPAFCGLASLSMVLNSLSIDPGRKWKGPWRWFDESMLECCEPLEIVKDKGISFGKVVCLAHSSGAKVEAFRTNQSTIDDFRKYVVKCSTSDNCHMISTYHRQVLKQTGTGHFSPIGGYNAERDMALILDVARFKYPPHWVPLKLLWDAMDSIDQSTGRRRGFMLISRPHREPGLLYTLSCKDESWISIAKYLKEDVPRLVSSQHVDTIERILYVVFKSLPANFNQFIKWMAEIRRTEDVNQNLSSEEKSRLKLKQELLKQVQETKLFKHVDKFLSSVYEDNLPYVAAKVYCDGDEILSGYESDESCCKETCVKCIKGLGEEKVTVVAYPSGNDVFTALLLALPPQTWSGIKDQSLLQEMKQLISMVSHPTLLQQEVLHLRRQLEMLKRCQENKEDEELSAPA.

The Peptidase C83 domain maps to 1–220 (MSMASLYRRS…GFMLISRPHR (220 aa)). Positions 287–315 (EDVNQNLSSEEKSRLKLKQELLKQVQETK) form a coiled coil.

The protein belongs to the phytochelatin synthase family. Expressed in shoots, roots, leaves, stems and flowers.

It carries out the reaction [Glu(-Cys)](n)-Gly + glutathione + H(+) = [Glu(-Cys)](n+1)-Gly + glycine. Requires cadmium for activity. Also activated in heterologous system by AsO(4)(3-) ions, but not by Cu(2+), Zn(2+), Mn(2+) or Ni(2+) ions. In terms of biological role, involved in the synthesis of phytochelatins (PC) and homophytochelatins (hPC), the heavy-metal-binding peptides of plants. The chain is Glutathione gamma-glutamylcysteinyltransferase 2 (PCS2) from Arabidopsis thaliana (Mouse-ear cress).